A 653-amino-acid chain; its full sequence is Fructose-1,6-bisphosphatase class 3 (653 aa).

Belongs to the FBPase class 3 family. Mn(2+) is required as a cofactor.

It catalyses the reaction beta-D-fructose 1,6-bisphosphate + H2O = beta-D-fructose 6-phosphate + phosphate. Its pathway is carbohydrate biosynthesis; gluconeogenesis. The sequence is that of Fructose-1,6-bisphosphatase class 3 from Listeria monocytogenes serovar 1/2a (strain ATCC BAA-679 / EGD-e).